We begin with the raw amino-acid sequence, 440 residues long: tRNA modification GTPase MnmE (440 aa).

Residues R34, E94, and R134 each contribute to the (6S)-5-formyl-5,6,7,8-tetrahydrofolate site. The TrmE-type G domain maps to 229–367; sequence GVRVVLAGPP…LVALLLDRAA (139 aa). N239 serves as a coordination point for K(+). GTP contacts are provided by residues 239–244, 258–264, 283–286, and 348–350; these read NAGKST, TPIAGTT, DTAG, and SAR. S243 contributes to the Mg(2+) binding site. K(+)-binding residues include T258, I260, and T263. Position 264 (T264) interacts with Mg(2+). K440 provides a ligand contact to (6S)-5-formyl-5,6,7,8-tetrahydrofolate.

It belongs to the TRAFAC class TrmE-Era-EngA-EngB-Septin-like GTPase superfamily. TrmE GTPase family. As to quaternary structure, homodimer. Heterotetramer of two MnmE and two MnmG subunits. The cofactor is K(+).

The protein localises to the cytoplasm. Its function is as follows. Exhibits a very high intrinsic GTPase hydrolysis rate. Involved in the addition of a carboxymethylaminomethyl (cmnm) group at the wobble position (U34) of certain tRNAs, forming tRNA-cmnm(5)s(2)U34. The sequence is that of tRNA modification GTPase MnmE from Rhizorhabdus wittichii (strain DSM 6014 / CCUG 31198 / JCM 15750 / NBRC 105917 / EY 4224 / RW1) (Sphingomonas wittichii).